Here is a 981-residue protein sequence, read N- to C-terminus: Protein deadlock (981 aa).

Positions 1-60 are required for interaction with rhi/rhino; that stretch reads MEKLDKIRMSQKLSCWQHILTTLGTSSKTEQEWNTFFKGFLESWRKPYCIQTSCDPSIPL. 6 disordered regions span residues 72–195, 274–307, 327–352, 375–446, 554–586, and 642–662; these read LQEN…ACAP, IMDK…DDQL, SRNE…NKKE, LRKS…PNNI, GLDD…ETLK, and LVHQ…TAAR. Composition is skewed to polar residues over residues 104-113 and 150-160; these read PSKSHSTGST and NHTTSIFSKAQ. The segment covering 167-191 has biased composition (basic and acidic residues); that stretch reads KLSSTKKRPDTCAPTDDSRKNREPR. Basic and acidic residues predominate over residues 337–352; it reads EKVKLKGERPAQNKKE. Basic residues predominate over residues 377–390; that stretch reads KSVKKSAKQQKPRV. The segment covering 409–419 has biased composition (basic and acidic residues); that stretch reads TQDKQSTHEMI. Polar residues predominate over residues 422-446; sequence QAKTISEASGQQTSQVQSSLSPNNI. A compositionally biased stretch (basic and acidic residues) spans 652–662; it reads RNQRDEATAAR.

As to quaternary structure, component of the Rhino-Deadlock-Cutoff (RDC) complex, composed of rhi/rhino, del/deadlock and cuff/cutoff. Interacts (via N-terminus) with rhi/rhino (via C-terminus); this interaction is direct. Interacts (via C-terminus) with cuff/cutoff; this interaction is direct.

The protein resides in the nucleus. The protein localises to the cytoplasm. It localises to the cytoskeleton. It is found in the microtubule organizing center. Its subcellular location is the centrosome. The protein resides in the chromosome. In terms of biological role, developmental protein involved in oogenesis. Required for germline maintenance, stability of mitotic spindles, localization of patterning determinants, oocyte growth and fusome biogenesis in males and females. Also required for dorso-ventral and antero-posterior patterning of oocyte and eggshell. May be involved in microtubule function during oogenesis. Part of a rhi-dependent transcription machinery that enables the generation of piRNA precursors from heterochromatin while maintaining the suppression of transposon-encoded promoters and enhancers. Component of the RDC complex (rhi, del and cuff) which binds to repressive H3K9me3 marks in the piRNA clusters. RDC promotes the bidirectional transcription of piRNA clusters at these sites by interacting with Moonshiner which forms a complex with the transcription initiation factors TfIIA-S and Trf2. This mechanism allows transcription to occur in piRNA clusters despite the lack of proper promoter elements and in the presence of the repressive H3K9me3 mark. As part of the RDC complex, involved in suppression of splicing. The sequence is that of Protein deadlock (del) from Drosophila melanogaster (Fruit fly).